Consider the following 599-residue polypeptide: Prostaglandin G/H synthase 1 (599 aa).

A signal peptide spans 1-23 (MSRSLLLWFLLFLLLLPPLPVLL). The EGF-like domain occupies 31-69 (PVNPCCYYPCQHQGICVRFGLDRYQCDCTRTGYSGPNCT). 4 disulfides stabilise this stretch: cysteine 35/cysteine 46, cysteine 36/cysteine 158, cysteine 40/cysteine 56, and cysteine 58/cysteine 68. 3 N-linked (GlcNAc...) asparagine glycosylation sites follow: asparagine 67, asparagine 103, and asparagine 143. The active-site Proton acceptor is the histidine 206. The active-site For cyclooxygenase activity is tyrosine 384. Heme b is bound at residue histidine 387. An intrachain disulfide couples cysteine 568 to cysteine 574.

Belongs to the prostaglandin G/H synthase family. In terms of assembly, homodimer. It depends on heme b as a cofactor.

Its subcellular location is the microsome membrane. The protein resides in the endoplasmic reticulum membrane. The enzyme catalyses (5Z,8Z,11Z,14Z)-eicosatetraenoate + AH2 + 2 O2 = prostaglandin H2 + A + H2O. It carries out the reaction (5Z,8Z,11Z,14Z)-eicosatetraenoate + 2 O2 = prostaglandin G2. The catalysed reaction is prostaglandin G2 + AH2 = prostaglandin H2 + A + H2O. It catalyses the reaction (9Z,12Z)-octadecadienoate + AH2 + O2 = (9R)-hydroxy-(10E,12Z)-octadecadienoate + A + H2O. The enzyme catalyses (9Z,12Z)-octadecadienoate + AH2 + O2 = (9S)-hydroxy-(10E,12Z)-octadecadienoate + A + H2O. It carries out the reaction (9Z,12Z)-octadecadienoate + AH2 + O2 = (13S)-hydroxy-(9Z,11E)-octadecadienoate + A + H2O. The catalysed reaction is (9Z,12Z)-octadecadienoate + AH2 + O2 = (13R)-hydroxy-(9Z,11E)-octadecadienoate + A + H2O. Its pathway is lipid metabolism; prostaglandin biosynthesis. The cyclooxygenase activity is inhibited by nonsteroidal anti-inflammatory drugs (NSAIDs) including ibuprofen, flurbiprofen, ketoprofen, naproxen, flurbiprofen, anirolac, fenclofenac and diclofenac. Functionally, dual cyclooxygenase and peroxidase that plays an important role in the biosynthesis pathway of prostanoids, a class of C20 oxylipins mainly derived from arachidonate ((5Z,8Z,11Z,14Z)-eicosatetraenoate, AA, C20:4(n-6)), with a particular role in the inflammatory response. The cyclooxygenase activity oxygenates AA to the hydroperoxy endoperoxide prostaglandin G2 (PGG2), and the peroxidase activity reduces PGG2 to the hydroxy endoperoxide prostaglandin H2 (PGH2), the precursor of all 2-series prostaglandins and thromboxanes. This complex transformation is initiated by abstraction of hydrogen at carbon 13 (with S-stereochemistry), followed by insertion of molecular O2 to form the endoperoxide bridge between carbon 9 and 11 that defines prostaglandins. The insertion of a second molecule of O2 (bis-oxygenase activity) yields a hydroperoxy group in PGG2 that is then reduced to PGH2 by two electrons. Involved in the constitutive production of prostanoids in particular in the stomach and platelets. In gastric epithelial cells, it is a key step in the generation of prostaglandins, such as prostaglandin E2 (PGE2), which plays an important role in cytoprotection. In platelets, it is involved in the generation of thromboxane A2 (TXA2), which promotes platelet activation and aggregation, vasoconstriction and proliferation of vascular smooth muscle cells. Can also use linoleate (LA, (9Z,12Z)-octadecadienoate, C18:2(n-6)) as substrate and produce hydroxyoctadecadienoates (HODEs) in a regio- and stereospecific manner, being (9R)-HODE ((9R)-hydroxy-(10E,12Z)-octadecadienoate) and (13S)-HODE ((13S)-hydroxy-(9Z,11E)-octadecadienoate) its major products. This Homo sapiens (Human) protein is Prostaglandin G/H synthase 1.